We begin with the raw amino-acid sequence, 198 residues long: Na(+)-translocating NADH-quinone reductase subunit E (198 aa).

Transmembrane regions (helical) follow at residues 11 to 31 (SIFIENMALSFFLGMCTFLAV), 35 to 55 (VSTAFGLGIAVIVVLGIAVPA), 77 to 97 (FLNFITFIGVIAALVQILEMI), 110 to 130 (GIFLPLITVNCAIFGAVSFMV), 140 to 160 (VVYGIGAGTGWMLAIVALAGI), and 176 to 196 (LGITFISAGLMALGFMSFSGI).

The protein belongs to the NqrDE/RnfAE family. As to quaternary structure, composed of six subunits; NqrA, NqrB, NqrC, NqrD, NqrE and NqrF.

Its subcellular location is the cell inner membrane. It catalyses the reaction a ubiquinone + n Na(+)(in) + NADH + H(+) = a ubiquinol + n Na(+)(out) + NAD(+). Functionally, NQR complex catalyzes the reduction of ubiquinone-1 to ubiquinol by two successive reactions, coupled with the transport of Na(+) ions from the cytoplasm to the periplasm. NqrA to NqrE are probably involved in the second step, the conversion of ubisemiquinone to ubiquinol. In Glaesserella parasuis serovar 5 (strain SH0165) (Haemophilus parasuis), this protein is Na(+)-translocating NADH-quinone reductase subunit E.